Reading from the N-terminus, the 936-residue chain is Isoleucine--tRNA ligase (936 aa).

Residues 58-68 (PYANGRAHLGT) carry the 'HIGH' region motif. An L-isoleucyl-5'-AMP-binding site is contributed by glutamate 561. Residues 602-606 (KMSKS) carry the 'KMSKS' region motif. ATP is bound at residue lysine 605. Positions 899, 902, 919, and 922 each coordinate Zn(2+).

Belongs to the class-I aminoacyl-tRNA synthetase family. IleS type 1 subfamily. Monomer. It depends on Zn(2+) as a cofactor.

Its subcellular location is the cytoplasm. The enzyme catalyses tRNA(Ile) + L-isoleucine + ATP = L-isoleucyl-tRNA(Ile) + AMP + diphosphate. Functionally, catalyzes the attachment of isoleucine to tRNA(Ile). As IleRS can inadvertently accommodate and process structurally similar amino acids such as valine, to avoid such errors it has two additional distinct tRNA(Ile)-dependent editing activities. One activity is designated as 'pretransfer' editing and involves the hydrolysis of activated Val-AMP. The other activity is designated 'posttransfer' editing and involves deacylation of mischarged Val-tRNA(Ile). In Coxiella burnetii (strain RSA 331 / Henzerling II), this protein is Isoleucine--tRNA ligase.